Consider the following 911-residue polypeptide: MFAPLLKKLFGSKNEREVKRMLKTVSIVNAFEEKMVALSDEQLRGKTAEFKERLAKGETLDQLLPEAFAVAREAGKRVMGMRHFDVQLIGGMTLHEGMIAEMRTGEGKTLVGTLAVYLNALSGKGVHVVTVNDYLARRDANWMRPLYEFLGLSVGIVSAFQPPEEKRAAYAADITYGTNNEFGFDYLRDNMAFSQDEKFQRELNFAVIDEVDSILIDEARTPLIISGQAEDSSKLYIEINRLIPRLTQHIEEVEGQVTQEGHFTIDEKSRQVELNEAGHQFIEEMLAQAGLLAEGESLYSAHNLGLLTHVYAGLRAHKLFHRNVEYIVQDGQVLLIDEHTGRTMPGRRLSEGLHQAIEAKENLNIQAESQTLASTTFQNYFRLYTKLSGMTGTADTEAFEFQSIYGLNVMVIPPNKPLARKDYNDLVYLTADEKYAAIIADIKESMKLGRPVLVGTATIETSEHMSNLLKKEGIDHKVLNAKYHEKEAEIIAQAGAPGALTIATNMAGRGTDILLGGNWEAEVAALENPTAEQIAQIKADWQKRHQQVIETGGLHVIASERHESRRIDNQLRGRSGRQGDPGSSRFYLSLEDSLMRIFASDRVKNFMKALGMQSGEAIEHRMVTNAIEKAQRKVEGRNFDIRKQLLEYDDVANEQRKVIYHMRNSLLAAENIGDTIVEFRKEVLDATISQHIPPQSLPEQWDVAGLEASLASDFAIKLPIQQWLDEDDHLYEETLREKLLSEITTAYTEKEDQAGLDALRTFEKQILLRVLDDLWKDHLSTMDHLRHGIHLRGYAQKNPKQEYKRESFSLFQELLESIKRDTIRVLSHVQVRREDPAEEEARLRREAEELASRMQFQHAAAPGLESEQLSEEGAEVAVASAPVRNDQKLGRNEPCWCGSGKKFKHCHGQIE.

Residues Gln-87, 105–109 (GEGKT), and Asp-512 contribute to the ATP site. The tract at residues 861–893 (APGLESEQLSEEGAEVAVASAPVRNDQKLGRNE) is disordered. The Zn(2+) site is built by Cys-895, Cys-897, Cys-906, and His-907.

It belongs to the SecA family. As to quaternary structure, monomer and homodimer. Part of the essential Sec protein translocation apparatus which comprises SecA, SecYEG and auxiliary proteins SecDF-YajC and YidC. The cofactor is Zn(2+).

It is found in the cell inner membrane. The protein localises to the cytoplasm. It catalyses the reaction ATP + H2O + cellular proteinSide 1 = ADP + phosphate + cellular proteinSide 2.. Part of the Sec protein translocase complex. Interacts with the SecYEG preprotein conducting channel. Has a central role in coupling the hydrolysis of ATP to the transfer of proteins into and across the cell membrane, serving both as a receptor for the preprotein-SecB complex and as an ATP-driven molecular motor driving the stepwise translocation of polypeptide chains across the membrane. The sequence is that of Protein translocase subunit SecA from Pseudomonas putida (strain ATCC 700007 / DSM 6899 / JCM 31910 / BCRC 17059 / LMG 24140 / F1).